A 165-amino-acid polypeptide reads, in one-letter code: NADPH-dependent 7-cyano-7-deazaguanine reductase (165 aa).

The active-site Thioimide intermediate is the Cys56. Asp63 (proton donor) is an active-site residue. Residues 78-80 (VES) and 97-98 (HE) contribute to the substrate site.

The protein belongs to the GTP cyclohydrolase I family. QueF type 1 subfamily.

The protein localises to the cytoplasm. It catalyses the reaction 7-aminomethyl-7-carbaguanine + 2 NADP(+) = 7-cyano-7-deazaguanine + 2 NADPH + 3 H(+). It functions in the pathway tRNA modification; tRNA-queuosine biosynthesis. Its function is as follows. Catalyzes the NADPH-dependent reduction of 7-cyano-7-deazaguanine (preQ0) to 7-aminomethyl-7-deazaguanine (preQ1). This Bacillus licheniformis (strain ATCC 14580 / DSM 13 / JCM 2505 / CCUG 7422 / NBRC 12200 / NCIMB 9375 / NCTC 10341 / NRRL NRS-1264 / Gibson 46) protein is NADPH-dependent 7-cyano-7-deazaguanine reductase.